A 549-amino-acid chain; its full sequence is Chaperonin GroEL (549 aa).

Residues 29 to 32 (TLGP), K50, 86 to 90 (DGTTT), G414, 478 to 480 (NAA), and D494 each bind ATP.

This sequence belongs to the chaperonin (HSP60) family. In terms of assembly, forms a cylinder of 14 subunits composed of two heptameric rings stacked back-to-back. Interacts with the co-chaperonin GroES.

The protein resides in the cytoplasm. The enzyme catalyses ATP + H2O + a folded polypeptide = ADP + phosphate + an unfolded polypeptide.. Its function is as follows. Together with its co-chaperonin GroES, plays an essential role in assisting protein folding. The GroEL-GroES system forms a nano-cage that allows encapsulation of the non-native substrate proteins and provides a physical environment optimized to promote and accelerate protein folding. In Psychrobacter cryohalolentis (strain ATCC BAA-1226 / DSM 17306 / VKM B-2378 / K5), this protein is Chaperonin GroEL.